The sequence spans 493 residues: Cytochrome P450 2E1 (493 aa).

298 to 303 is a binding site for substrate; it reads FAGTET. Heme is bound at residue C437.

Belongs to the cytochrome P450 family. Interacts with chaperones HSP70 and HSP90; this interaction is required for initial targeting to mitochondria. The cofactor is heme. In terms of tissue distribution, highest level in the liver and to a lesser extent in the kidney, with a higher level in the male kidney than in the female.

It is found in the endoplasmic reticulum membrane. Its subcellular location is the microsome membrane. The protein localises to the mitochondrion inner membrane. The catalysed reaction is an organic molecule + reduced [NADPH--hemoprotein reductase] + O2 = an alcohol + oxidized [NADPH--hemoprotein reductase] + H2O + H(+). It catalyses the reaction (5Z,8Z,11Z)-eicosatrienoate + reduced [NADPH--hemoprotein reductase] + O2 = 19-hydroxy-(5Z,8Z,11Z)-eicosatrienoate + oxidized [NADPH--hemoprotein reductase] + H2O + H(+). The enzyme catalyses (5Z,8Z,11Z,14Z,17Z)-eicosapentaenoate + reduced [NADPH--hemoprotein reductase] + O2 = 19-hydroxy-(5Z,8Z,11Z,14Z,17Z)-eicosapentaenoate + oxidized [NADPH--hemoprotein reductase] + H2O + H(+). It carries out the reaction (4Z,7Z,10Z,13Z,16Z,19Z)-docosahexaenoate + reduced [NADPH--hemoprotein reductase] + O2 = 21-hydroxy-(4Z,7Z,10Z,13Z,16Z,19Z)-docosahexaenoate + oxidized [NADPH--hemoprotein reductase] + H2O + H(+). The catalysed reaction is dodecanoate + reduced [NADPH--hemoprotein reductase] + O2 = 11-hydroxydodecanoate + oxidized [NADPH--hemoprotein reductase] + H2O + H(+). It catalyses the reaction tetradecanoate + reduced [NADPH--hemoprotein reductase] + O2 = 13-hydroxytetradecanoate + oxidized [NADPH--hemoprotein reductase] + H2O + H(+). The enzyme catalyses 4-nitrophenol + NADPH + O2 + H(+) = 4-nitrocatechol + NADP(+) + H2O. The protein operates within lipid metabolism; fatty acid metabolism. Its activity is regulated as follows. The omega-1 hydroxylase activity is stimulated by cytochrome b5. In terms of biological role, a cytochrome P450 monooxygenase involved in the metabolism of fatty acids. Mechanistically, uses molecular oxygen inserting one oxygen atom into a substrate, and reducing the second into a water molecule, with two electrons provided by NADPH via cytochrome P450 reductase (NADPH--hemoprotein reductase). Catalyzes the hydroxylation of carbon-hydrogen bonds. Hydroxylates fatty acids specifically at the omega-1 position displaying the highest catalytic activity for saturated fatty acids. May be involved in the oxidative metabolism of xenobiotics. The protein is Cytochrome P450 2E1 (Cyp2e1) of Mus musculus (Mouse).